Reading from the N-terminus, the 306-residue chain is 4-hydroxy-3-methylbut-2-enyl diphosphate reductase 1 (306 aa).

Residue Cys-10 coordinates [4Fe-4S] cluster. Positions 39 and 72 each coordinate (2E)-4-hydroxy-3-methylbut-2-enyl diphosphate. Residues His-39 and His-72 each contribute to the dimethylallyl diphosphate site. Residues His-39 and His-72 each coordinate isopentenyl diphosphate. A [4Fe-4S] cluster-binding site is contributed by Cys-94. His-122 serves as a coordination point for (2E)-4-hydroxy-3-methylbut-2-enyl diphosphate. His-122 is a binding site for dimethylallyl diphosphate. Isopentenyl diphosphate is bound at residue His-122. Glu-124 acts as the Proton donor in catalysis. (2E)-4-hydroxy-3-methylbut-2-enyl diphosphate is bound at residue Thr-162. Residue Cys-192 participates in [4Fe-4S] cluster binding. (2E)-4-hydroxy-3-methylbut-2-enyl diphosphate is bound by residues Ser-220, Ser-221, Asn-222, and Ser-264. 4 residues coordinate dimethylallyl diphosphate: Ser-220, Ser-221, Asn-222, and Ser-264. 4 residues coordinate isopentenyl diphosphate: Ser-220, Ser-221, Asn-222, and Ser-264.

The protein belongs to the IspH family. [4Fe-4S] cluster serves as cofactor.

It catalyses the reaction isopentenyl diphosphate + 2 oxidized [2Fe-2S]-[ferredoxin] + H2O = (2E)-4-hydroxy-3-methylbut-2-enyl diphosphate + 2 reduced [2Fe-2S]-[ferredoxin] + 2 H(+). The enzyme catalyses dimethylallyl diphosphate + 2 oxidized [2Fe-2S]-[ferredoxin] + H2O = (2E)-4-hydroxy-3-methylbut-2-enyl diphosphate + 2 reduced [2Fe-2S]-[ferredoxin] + 2 H(+). It functions in the pathway isoprenoid biosynthesis; dimethylallyl diphosphate biosynthesis; dimethylallyl diphosphate from (2E)-4-hydroxy-3-methylbutenyl diphosphate: step 1/1. The protein operates within isoprenoid biosynthesis; isopentenyl diphosphate biosynthesis via DXP pathway; isopentenyl diphosphate from 1-deoxy-D-xylulose 5-phosphate: step 6/6. Catalyzes the conversion of 1-hydroxy-2-methyl-2-(E)-butenyl 4-diphosphate (HMBPP) into a mixture of isopentenyl diphosphate (IPP) and dimethylallyl diphosphate (DMAPP). Acts in the terminal step of the DOXP/MEP pathway for isoprenoid precursor biosynthesis. This is 4-hydroxy-3-methylbut-2-enyl diphosphate reductase 1 from Rhodopseudomonas palustris (strain ATCC BAA-98 / CGA009).